Consider the following 440-residue polypeptide: Glutamate--tRNA ligase 2 (440 aa).

Residues 8–18 (PSPTGYLHVGN) carry the 'HIGH' region motif. A 'KMSKS' region motif is present at residues 239–243 (ALSKR). K242 is a binding site for ATP.

Belongs to the class-I aminoacyl-tRNA synthetase family. Glutamate--tRNA ligase type 1 subfamily. Monomer.

It localises to the cytoplasm. The catalysed reaction is tRNA(Glu) + L-glutamate + ATP = L-glutamyl-tRNA(Glu) + AMP + diphosphate. Catalyzes the attachment of glutamate to tRNA(Glu) in a two-step reaction: glutamate is first activated by ATP to form Glu-AMP and then transferred to the acceptor end of tRNA(Glu). This Dinoroseobacter shibae (strain DSM 16493 / NCIMB 14021 / DFL 12) protein is Glutamate--tRNA ligase 2.